Here is a 927-residue protein sequence, read N- to C-terminus: Alpha-catenin-like protein hmp-1 (927 aa).

Coiled coils occupy residues 319-354 and 672-696; these read TREN…RRDD and QENQ…QIDI. The disordered stretch occupies residues 901-927; that stretch reads RNEIETGRDSDDEELDRRHQQRINGRL.

It belongs to the vinculin/alpha-catenin family. In terms of assembly, component of a core catenin-cadherin complex consisting of hmr-1, hmp-1 and hmp-2; the complex localizes to adherens junctions. May interact with hmp-2. Epidermal cells.

It localises to the cell junction. Its subcellular location is the adherens junction. It is found in the cytoplasm. Its function is as follows. Required for cell migration during body enclosure and cell shape changes during body elongation. Required for proper localization of other junctional components, such as pac-1. The protein is Alpha-catenin-like protein hmp-1 (hmp-1) of Caenorhabditis elegans.